A 258-amino-acid chain; its full sequence is 4-hydroxy-tetrahydrodipicolinate reductase (258 aa).

NAD(+) is bound by residues 9–14 (GASGRM), 91–93 (GTT), and 115–118 (SPNM). Histidine 148 acts as the Proton donor/acceptor in catalysis. Histidine 149 lines the (S)-2,3,4,5-tetrahydrodipicolinate pocket. Lysine 152 serves as the catalytic Proton donor. 158-159 (GT) is a binding site for (S)-2,3,4,5-tetrahydrodipicolinate.

The protein belongs to the DapB family.

Its subcellular location is the cytoplasm. The catalysed reaction is (S)-2,3,4,5-tetrahydrodipicolinate + NAD(+) + H2O = (2S,4S)-4-hydroxy-2,3,4,5-tetrahydrodipicolinate + NADH + H(+). The enzyme catalyses (S)-2,3,4,5-tetrahydrodipicolinate + NADP(+) + H2O = (2S,4S)-4-hydroxy-2,3,4,5-tetrahydrodipicolinate + NADPH + H(+). Its pathway is amino-acid biosynthesis; L-lysine biosynthesis via DAP pathway; (S)-tetrahydrodipicolinate from L-aspartate: step 4/4. Functionally, catalyzes the conversion of 4-hydroxy-tetrahydrodipicolinate (HTPA) to tetrahydrodipicolinate. The protein is 4-hydroxy-tetrahydrodipicolinate reductase of Lawsonia intracellularis (strain PHE/MN1-00).